The sequence spans 605 residues: Probable potassium transport system protein Kup (605 aa).

The next 12 membrane-spanning stretches (helical) occupy residues 18-38, 46-66, 97-117, 138-158, 169-189, 204-224, 247-267, 287-307, 339-359, 368-388, 395-415, and 418-438; these read GLVFGDIGTSPIYTLTVIIAL, ILGIISLIVWTLIILVHLEYA, MAFVTFLTYLGVALLMGDGVI, GLSQNTLILIAGTIALFLFVF, AFGPIMVLWFAALALSGAISV, AISFLMHNGLPGFFVLSEVIL, AWYFVFVALVINYLGQGAFII, FYIPFLILTILATIIASQALI, IYIGSVNWLLLCLVILIMLVF, AYGFAVTGTMVITGIMMTMIF, WKVPLALFVTLVDVVFLVSNC, and LPHGGYWSLILASVPLAVILI.

Belongs to the HAK/KUP transporter (TC 2.A.72) family.

It is found in the cell inner membrane. It catalyses the reaction K(+)(in) + H(+)(in) = K(+)(out) + H(+)(out). Transport of potassium into the cell. Likely operates as a K(+):H(+) symporter. This Pelobacter propionicus (strain DSM 2379 / NBRC 103807 / OttBd1) protein is Probable potassium transport system protein Kup.